Reading from the N-terminus, the 146-residue chain is Protein MGF 100-3L (146 aa).

Belongs to the asfivirus MGF 100 family.

Functionally, plays a role in virus cell tropism, and may be required for efficient virus replication in macrophages. The protein is Protein MGF 100-3L of Ornithodoros (relapsing fever ticks).